The following is a 129-amino-acid chain: Small ribosomal subunit protein uS12 (129 aa).

At aspartate 89 the chain carries 3-methylthioaspartic acid. The disordered stretch occupies residues 110–129; it reads RKQGRSRYGAPRKQVVATKK.

It belongs to the universal ribosomal protein uS12 family. As to quaternary structure, part of the 30S ribosomal subunit. Contacts proteins S8 and S17. May interact with IF1 in the 30S initiation complex.

In terms of biological role, with S4 and S5 plays an important role in translational accuracy. Its function is as follows. Interacts with and stabilizes bases of the 16S rRNA that are involved in tRNA selection in the A site and with the mRNA backbone. Located at the interface of the 30S and 50S subunits, it traverses the body of the 30S subunit contacting proteins on the other side and probably holding the rRNA structure together. The combined cluster of proteins S8, S12 and S17 appears to hold together the shoulder and platform of the 30S subunit. This is Small ribosomal subunit protein uS12 from Rickettsia bellii (strain OSU 85-389).